Consider the following 182-residue polypeptide: CDP-diacylglycerol--glycerol-3-phosphate 3-phosphatidyltransferase (182 aa).

Residues 2–12 (QFNIPTLLTLF) lie on the Cytoplasmic side of the membrane. The chain crosses the membrane as a helical span at residues 13–37 (RVILIPFFVLVFYLPVTWSPFAAAL). Residues 38-60 (IFCVAAVTDWFDGFLARRWNQST) are Periplasmic-facing. Residues 61–81 (RFGAFLDPVADKVLVAIAMVL) form a helical membrane-spanning segment. At 82-86 (VTEHY) the chain is on the cytoplasmic side. A helical transmembrane segment spans residues 87 to 107 (HSWWVTLPAATMIAREIIISA). Topologically, residues 108–145 (LREWMAELGKRSSVAVSWIGKVKTTAQMVALAWLLWRP) are periplasmic. A helical transmembrane segment spans residues 146–168 (NIWVEYAGIALFFVAAVLTLWSM). Over 169-181 (LQYLSAARADLLD) the chain is Cytoplasmic.

Belongs to the CDP-alcohol phosphatidyltransferase class-I family.

Its subcellular location is the cell inner membrane. The enzyme catalyses a CDP-1,2-diacyl-sn-glycerol + sn-glycerol 3-phosphate = a 1,2-diacyl-sn-glycero-3-phospho-(1'-sn-glycero-3'-phosphate) + CMP + H(+). It participates in phospholipid metabolism; phosphatidylglycerol biosynthesis; phosphatidylglycerol from CDP-diacylglycerol: step 1/2. Catalyzes the conversion of cytidine diphosphate diacylglycerol (CDP-DG) and glycerol 3-phosphate into phosphatidylglycerol. Essential for the synthesis of anionic phospholipids, thereby playing a role in balancing the ratio of zwitterionic and anionic phospholipids, which is thought to be important for normal membrane function. The sequence is that of CDP-diacylglycerol--glycerol-3-phosphate 3-phosphatidyltransferase from Shigella sonnei (strain Ss046).